The primary structure comprises 354 residues: Guanine nucleotide-binding protein G(i) subunit alpha-3 (354 aa).

Residue Gly2 is the site of N-myristoyl glycine attachment. Cys3 carries the S-palmitoyl cysteine lipid modification. The 323-residue stretch at 32 to 354 (KEVKLLLLGA…KNNLKECGLY (323 aa)) folds into the G-alpha domain. Residues 35 to 48 (KLLLLGAGESGKST) form a G1 motif region. Gly42, Glu43, Ser44, Gly45, Lys46, Ser47, Thr48, Asp150, Ser151, Leu175, Arg176, Thr177, Arg178, Val179, Lys180, Thr181, Val201, Gly203, Asn269, Lys270, Asp272, Leu273, Cys325, Ala326, and Thr327 together coordinate GTP. Ser47 is a binding site for Mg(2+). Residues 173–181 (DVLRTRVKT) are G2 motif. Position 181 (Thr181) interacts with Mg(2+). The tract at residues 196 to 205 (FKMFDVGGQR) is G3 motif. Positions 265 to 272 (ILFLNKKD) are G4 motif. The interval 324–329 (TCATDT) is G5 motif.

It belongs to the G-alpha family. G(i/o/t/z) subfamily. Heterotrimeric G proteins are composed of 3 units; alpha, beta and gamma. The alpha subunit contains the guanine nucleotide binding site. GTP binding causes dissociation of the heterotrimer, liberating the individual subunits so that they can interact with downstream effector proteins. Forms a complex with CCDC88A/GIV and EGFR which leads to enhanced EGFR signaling and triggering of cell migration; ligand stimulation is required for recruitment of GNAI3 to the complex. Interacts (inactive GDP-bound form) with CCDC88A/GIV (via GBA motif); the interaction leads to activation of GNAI3. Interacts (inactive GDP-bound form) with CCDC88C/DAPLE (via GBA motif); the interaction leads to activation of GNAI3. Interacts (inactive GDP-bound form) with NUCB1 (via GBA motif) and NUCB2 (via GBA motif); the interaction leads to activation of GNAI3. Interacts (inactive GDP-bound form) with PLCD4 (via GBA motif); the interaction leads to activation of GNAI3. Interacts with INSR; the interaction is probably mediated by CCDC88A/GIV. Interacts with GPSM1. Interacts (GDP-bound form) with GPSM2 (via GoLoco domains). Does not interact with RGS2. Interacts with RGS8 and RGS10; this strongly enhances the intrinsic GTPase activity. Interacts with RGS16; this strongly enhances the intrinsic GTPase activity. Interacts with RGS12. Interacts (via active GTP- or inactive GDP-bound form) with RGS14. Interacts (via active GTP-bound form) with TRPC5 (via ANK repeats) in a homotetrameric ion channel; the interaction is direct and activates the channel activity.

The protein localises to the cytoplasm. The protein resides in the cell membrane. It localises to the cytoskeleton. It is found in the microtubule organizing center. Its subcellular location is the centrosome. In terms of biological role, heterotrimeric guanine nucleotide-binding proteins (G proteins) function as transducers downstream of G protein-coupled receptors (GPCRs) in numerous signaling cascades. The alpha chain contains the guanine nucleotide binding site and alternates between an active, GTP-bound state and an inactive, GDP-bound state. Signaling by an activated GPCR promotes GDP release and GTP binding. The alpha subunit has a low GTPase activity that converts bound GTP to GDP, thereby terminating the signal. Both GDP release and GTP hydrolysis are modulated by numerous regulatory proteins. Signaling is mediated via effector proteins, such as adenylate cyclase. Inhibits adenylate cyclase activity, leading to decreased intracellular cAMP levels. Stimulates the activity of receptor-regulated K(+) channels. The active GTP-bound form prevents the association of RGS14 with centrosomes and is required for the translocation of RGS14 from the cytoplasm to the plasma membrane. May play a role in cell division. The active GTP-bound form activates the calcium permeant TRPC5 ion channels. This Mus musculus (Mouse) protein is Guanine nucleotide-binding protein G(i) subunit alpha-3 (Gnai3).